The sequence spans 249 residues: Methyl-coenzyme M reductase I subunit gamma (249 aa).

Residue Arg120 participates in coenzyme M binding.

Belongs to the methyl-coenzyme M reductase gamma subunit family. In terms of assembly, MCR is a hexamer of two alpha, two beta, and two gamma chains, forming a dimer of heterotrimers. Coenzyme F430 serves as cofactor.

It is found in the cytoplasm. The enzyme catalyses coenzyme B + methyl-coenzyme M = methane + coenzyme M-coenzyme B heterodisulfide. Its pathway is one-carbon metabolism; methyl-coenzyme M reduction; methane from methyl-coenzyme M: step 1/1. Methyl-coenzyme M reductase activity is inhibited by 3-nitrooxypropanol (3-NOP) in vitro and in vivo, by oxidation of its active site Ni(I), which stops both growth and methanogenesis. Is also inhibited by the reaction product CoM-S-S-CoB. In terms of biological role, component of the methyl-coenzyme M reductase (MCR) I that catalyzes the reductive cleavage of methyl-coenzyme M (CoM-S-CH3 or 2-(methylthio)ethanesulfonate) using coenzyme B (CoB or 7-mercaptoheptanoylthreonine phosphate) as reductant which results in the production of methane and the mixed heterodisulfide of CoB and CoM (CoM-S-S-CoB). This is the final step in methanogenesis. Neither N-6-mercaptohexanoylthreonine phosphate (H-S-HxoTP) nor N-8-mercaptooctanoylthreonine phosphate (H-SOcoTP) nor any other thiol compound such as CoA or CoM can substitute for CoB as the electron donor. The chain is Methyl-coenzyme M reductase I subunit gamma (mcrG) from Methanothermobacter marburgensis (strain ATCC BAA-927 / DSM 2133 / JCM 14651 / NBRC 100331 / OCM 82 / Marburg) (Methanobacterium thermoautotrophicum).